We begin with the raw amino-acid sequence, 449 residues long: Tubulin beta-7 chain (449 aa).

Glutamine 11, glutamate 69, serine 138, glycine 142, threonine 143, glycine 144, asparagine 204, and asparagine 226 together coordinate GTP. A Mg(2+)-binding site is contributed by glutamate 69. The disordered stretch occupies residues 422–449; the sequence is YQQYQDATADEEGEYEEEEAEYEQEETY. Acidic residues predominate over residues 429-449; it reads TADEEGEYEEEEAEYEQEETY.

The protein belongs to the tubulin family. Dimer of alpha and beta chains. A typical microtubule is a hollow water-filled tube with an outer diameter of 25 nm and an inner diameter of 15 nM. Alpha-beta heterodimers associate head-to-tail to form protofilaments running lengthwise along the microtubule wall with the beta-tubulin subunit facing the microtubule plus end conferring a structural polarity. Microtubules usually have 13 protofilaments but different protofilament numbers can be found in some organisms and specialized cells. Mg(2+) is required as a cofactor.

It is found in the cytoplasm. The protein resides in the cytoskeleton. In terms of biological role, tubulin is the major constituent of microtubules, a cylinder consisting of laterally associated linear protofilaments composed of alpha- and beta-tubulin heterodimers. Microtubules grow by the addition of GTP-tubulin dimers to the microtubule end, where a stabilizing cap forms. Below the cap, tubulin dimers are in GDP-bound state, owing to GTPase activity of alpha-tubulin. The polypeptide is Tubulin beta-7 chain (TUBB7) (Arabidopsis thaliana (Mouse-ear cress)).